A 175-amino-acid chain; its full sequence is Cuticle protein CP1876 (175 aa).

In terms of tissue distribution, calcified shell.

This is Cuticle protein CP1876 from Cancer pagurus (Rock crab).